A 1381-amino-acid chain; its full sequence is Hepatocyte growth factor receptor (1381 aa).

Positions M1 to G24 are cleaved as a signal peptide. At E25 to L934 the chain is on the extracellular side. Residues K27–L515 form the Sema domain. Residue N45 is glycosylated (N-linked (GlcNAc...) asparagine). Cystine bridges form between C95–C101, C98–C160, C133–C141, and C172–C175. An N-linked (GlcNAc...) asparagine glycan is attached at N106. Residues N202 and N358 are each glycosylated (N-linked (GlcNAc...) asparagine). 2 cysteine pairs are disulfide-bonded: C298–C363 and C385–C397. N-linked (GlcNAc...) asparagine glycans are attached at residues N399, N405, and N449. 4 disulfides stabilise this stretch: C520-C538, C526-C561, C529-C545, and C541-C551. A glycan (N-linked (GlcNAc...) asparagine) is linked at N553. IPT/TIG domains lie at P563–V655, P657–R739, and P742–V836. A glycan (O-linked (Man) threonine) is linked at T582. N607 and N635 each carry an N-linked (GlcNAc...) asparagine glycan. T676 and T761 each carry an O-linked (Man) threonine glycan. 3 N-linked (GlcNAc...) asparagine glycosylation sites follow: N785, N879, and N930. A helical membrane pass occupies residues I935–L955. Over K956–T1381 the chain is Cytoplasmic. Residue S966 is modified to Phosphoserine. T977 carries the phosphothreonine modification. Residues S990, S997, and S1000 each carry the phosphoserine modification. Y1003 carries the phosphotyrosine modification. In terms of domain architecture, Protein kinase spans V1078–I1345. Residues I1084–V1092 and K1110 each bind ATP. The active-site Proton acceptor is the D1204. The segment at L1212–T1381 is interaction with RANBP9. Y1230 is subject to Phosphotyrosine. A phosphotyrosine; by autocatalysis mark is found at Y1234 and Y1235. Position 1289 is a phosphothreonine (T1289). An interaction with MUC20 region spans residues W1320–V1359. 2 positions are modified to phosphotyrosine; by autocatalysis: Y1349 and Y1356. Residue Y1365 is modified to Phosphotyrosine.

This sequence belongs to the protein kinase superfamily. Tyr protein kinase family. As to quaternary structure, heterodimer made of an alpha chain (50 kDa) and a beta chain (145 kDa) which are disulfide linked. Binds PLXNB1. Interacts when phosphorylated with downstream effectors including STAT3, PIK3R1, SRC, PCLG1, GRB2 and GAB1. Interacts with SPSB1, SPSB2 and SPSB4. Interacts with INPP5D/SHIP1. When phosphorylated at Tyr-1356, interacts with INPPL1/SHIP2. Interacts with RANBP9 and RANBP10, as well as SPSB1, SPSB2, SPSB3 and SPSB4. SPSB1 binding occurs in the presence and in the absence of HGF, however HGF treatment has a positive effect on this interaction. Interacts with MUC20; prevents interaction with GRB2 and suppresses hepatocyte growth factor-induced cell proliferation. Interacts with GRB10. Interacts with PTPN1 and PTPN2. Interacts with HSP90AA1 and HSP90AB1; the interaction suppresses MET kinase activity. Interacts with tensin TNS3. Interacts (when phosphorylated) with tensin TNS4 (via SH2 domain); the interaction increases MET protein stability by inhibiting MET endocytosis and subsequent lysosomal degradation. In terms of processing, autophosphorylated in response to ligand binding on Tyr-1234 and Tyr-1235 in the kinase domain leading to further phosphorylation of Tyr-1349 and Tyr-1356 in the C-terminal multifunctional docking site. Dephosphorylated by PTPRJ at Tyr-1349 and Tyr-1365. Dephosphorylated by PTPN1 and PTPN2. Post-translationally, ubiquitinated. Ubiquitination by CBL regulates the receptor stability and activity through proteasomal degradation. O-mannosylation of IPT/TIG domains by TMEM260 is required for protein maturation. O-mannosylated residues are composed of single mannose glycans that are not elongated or modified.

Its subcellular location is the membrane. The enzyme catalyses L-tyrosyl-[protein] + ATP = O-phospho-L-tyrosyl-[protein] + ADP + H(+). Its activity is regulated as follows. In its inactive state, the C-terminal tail interacts with the catalytic domain and inhibits the kinase activity. Upon ligand binding, the C-terminal tail is displaced and becomes phosphorylated, thus increasing the kinase activity. Receptor tyrosine kinase that transduces signals from the extracellular matrix into the cytoplasm by binding to hepatocyte growth factor/HGF ligand. Regulates many physiological processes including proliferation, scattering, morphogenesis and survival. Ligand binding at the cell surface induces autophosphorylation of MET on its intracellular domain that provides docking sites for downstream signaling molecules. Following activation by ligand, interacts with the PI3-kinase subunit PIK3R1, PLCG1, SRC, GRB2, STAT3 or the adapter GAB1. Recruitment of these downstream effectors by MET leads to the activation of several signaling cascades including the RAS-ERK, PI3 kinase-AKT, or PLCgamma-PKC. The RAS-ERK activation is associated with the morphogenetic effects while PI3K/AKT coordinates prosurvival effects. During embryonic development, MET signaling plays a role in gastrulation, development and migration of muscles and neuronal precursors, angiogenesis and kidney formation. In adults, participates in wound healing as well as organ regeneration and tissue remodeling. Also promotes differentiation and proliferation of hematopoietic cells. The chain is Hepatocyte growth factor receptor (MET) from Equus caballus (Horse).